The following is a 64-amino-acid chain: Large ribosomal subunit protein bL35 (64 aa).

The segment covering 1 to 24 (MPKMKSHRGACKRFKKTASGKVKR) has biased composition (basic residues). The interval 1-64 (MPKMKSHRGA…EKQIKRMILA (64 aa)) is disordered. A compositionally biased stretch (basic and acidic residues) spans 25-35 (ERMYGSHNLEK). The segment covering 36–45 (KNRKRTRRLH) has biased composition (basic residues).

This sequence belongs to the bacterial ribosomal protein bL35 family.

The protein is Large ribosomal subunit protein bL35 of Prosthecochloris aestuarii (strain DSM 271 / SK 413).